The following is a 369-amino-acid chain: Phospho-N-acetylmuramoyl-pentapeptide-transferase (369 aa).

The next 10 membrane-spanning stretches (helical) occupy residues 2–22 (IAIL…TPFF), 54–74 (GLVI…FLGL), 80–100 (GLLV…DDIL), 113–133 (FYKV…TFLV), 158–178 (ALFS…LLWI), 195–215 (LDGL…VIGF), 241–261 (PLDM…FLWW), 268–288 (IMMG…LSIL), 293–313 (LLFL…ILQI), and 347–367 (FWII…ADWL).

This sequence belongs to the glycosyltransferase 4 family. MraY subfamily. Mg(2+) serves as cofactor.

It localises to the cell membrane. The catalysed reaction is UDP-N-acetyl-alpha-D-muramoyl-L-alanyl-gamma-D-glutamyl-meso-2,6-diaminopimeloyl-D-alanyl-D-alanine + di-trans,octa-cis-undecaprenyl phosphate = di-trans,octa-cis-undecaprenyl diphospho-N-acetyl-alpha-D-muramoyl-L-alanyl-D-glutamyl-meso-2,6-diaminopimeloyl-D-alanyl-D-alanine + UMP. Its pathway is cell wall biogenesis; peptidoglycan biosynthesis. Functionally, catalyzes the initial step of the lipid cycle reactions in the biosynthesis of the cell wall peptidoglycan: transfers peptidoglycan precursor phospho-MurNAc-pentapeptide from UDP-MurNAc-pentapeptide onto the lipid carrier undecaprenyl phosphate, yielding undecaprenyl-pyrophosphoryl-MurNAc-pentapeptide, known as lipid I. The protein is Phospho-N-acetylmuramoyl-pentapeptide-transferase of Tropheryma whipplei (strain TW08/27) (Whipple's bacillus).